The primary structure comprises 579 residues: Vitamin B6 transporter TPN1 (579 aa).

The Cytoplasmic segment spans residues 1–98 (MNRDNMDTTK…LHVAGLWLSA (98 aa)). Residues 99 to 119 (TGGLSSMSSFLLGPLLFGLSF) form a helical membrane-spanning segment. Over 120 to 122 (RES) the chain is Extracellular. The chain crosses the membrane as a helical span at residues 123-143 (VASSLISVTIGCLIAAYCSIM). Residues 144-157 (GPQSGCRQMVTARY) are Cytoplasmic-facing. The chain crosses the membrane as a helical span at residues 158 to 178 (LFGWWFVKLVALASIIGVMGW). Topologically, residues 179–198 (SVVNSVVGGEMLAAISNDKV) are extracellular. A helical membrane pass occupies residues 199 to 219 (PLWVGIVIVTVCSFLVAIFGI). Topologically, residues 220–221 (KQ) are cytoplasmic. A helical transmembrane segment spans residues 222–242 (VIKVETYLSVPVLTAFLLLYI). Over 243 to 274 (SSSDKYSFVNAYVSKGNLDSSTRKGNWMSFFS) the chain is Extracellular. The helical transmembrane segment at 275–295 (LCYSITATWGSITADYYILFP) threads the bilayer. Over 296-302 (EDTPYIQ) the chain is Cytoplasmic. Residues 303–323 (IFCLTFFGTFLPTCFVGILGL) traverse the membrane as a helical segment. Residues 324–362 (LLASVAMSYKPWSVEYDSHGMGGLLWAGFQRWNGFGKFC) lie on the Extracellular side of the membrane. A helical transmembrane segment spans residues 363 to 383 (VVVLVFSLVSNNIINTYSAAF). The Cytoplasmic segment spans residues 384–394 (SIQLSSVFCAK). A helical membrane pass occupies residues 395–415 (IPRWFWSIVCTIICLVCALIG). The Extracellular segment spans residues 416 to 421 (RNHFST). The chain crosses the membrane as a helical span at residues 422–442 (ILGNFLPMIGYWISMYFILLF). The Cytoplasmic segment spans residues 443 to 519 (EENLVFRRFF…EVLTHGYAAT (77 aa)). Residues 520–540 (FAFIVGVAGVVVGMAQAYWIG) form a helical membrane-spanning segment. Over 541–545 (PIAAK) the chain is Extracellular. The chain crosses the membrane as a helical span at residues 546 to 566 (FGEYGGDVAMWLSMAFSGVVY). The Cytoplasmic portion of the chain corresponds to 567–579 (PPCRYLELRKFGR).

This sequence belongs to the purine-cytosine permease (2.A.39) family.

The protein resides in the membrane. Functionally, thiamine-regulated, high affinity import carrier of pyridoxine, pyridoxal and pyridoxamine. This is Vitamin B6 transporter TPN1 (TPN1) from Saccharomyces cerevisiae (strain ATCC 204508 / S288c) (Baker's yeast).